A 506-amino-acid polypeptide reads, in one-letter code: Protein MGF 505-9R (506 aa).

It belongs to the asfivirus MGF 505 family.

Plays a role in virus cell tropism, and may be required for efficient virus replication in macrophages. This chain is Protein MGF 505-9R, found in African swine fever virus (isolate Tick/South Africa/Pretoriuskop Pr4/1996) (ASFV).